Consider the following 381-residue polypeptide: Dual-specificity RNA methyltransferase RlmN (381 aa).

Glu-86 acts as the Proton acceptor in catalysis. Residues 105 to 338 (RHARYTICVS…CTIRQSKGLD (234 aa)) form the Radical SAM core domain. An intrachain disulfide couples Cys-112 to Cys-343. Residues Cys-119, Cys-123, and Cys-126 each contribute to the [4Fe-4S] cluster site. S-adenosyl-L-methionine is bound by residues 169–170 (GE), Ser-201, 224–226 (SLH), and Asn-300. The active-site S-methylcysteine intermediate is Cys-343. Positions 351-381 (ENPKFRANVSGNSAAKTEEKPTNDKTNVSKK) are disordered.

Belongs to the radical SAM superfamily. RlmN family. It depends on [4Fe-4S] cluster as a cofactor.

The protein localises to the cytoplasm. The catalysed reaction is adenosine(2503) in 23S rRNA + 2 reduced [2Fe-2S]-[ferredoxin] + 2 S-adenosyl-L-methionine = 2-methyladenosine(2503) in 23S rRNA + 5'-deoxyadenosine + L-methionine + 2 oxidized [2Fe-2S]-[ferredoxin] + S-adenosyl-L-homocysteine. It carries out the reaction adenosine(37) in tRNA + 2 reduced [2Fe-2S]-[ferredoxin] + 2 S-adenosyl-L-methionine = 2-methyladenosine(37) in tRNA + 5'-deoxyadenosine + L-methionine + 2 oxidized [2Fe-2S]-[ferredoxin] + S-adenosyl-L-homocysteine. Specifically methylates position 2 of adenine 2503 in 23S rRNA and position 2 of adenine 37 in tRNAs. m2A2503 modification seems to play a crucial role in the proofreading step occurring at the peptidyl transferase center and thus would serve to optimize ribosomal fidelity. The sequence is that of Dual-specificity RNA methyltransferase RlmN from Campylobacter concisus (strain 13826).